Consider the following 450-residue polypeptide: Folate synthesis bifunctional protein (450 aa).

Positions methionine 1–proline 166 are HPPK. In terms of domain architecture, Pterin-binding spans threonine 180 to alanine 441. The DHPS stretch occupies residues isoleucine 182–valine 450. Asparagine 187 contributes to the Mg(2+) binding site. Residues threonine 227, aspartate 267, asparagine 287, aspartate 358, lysine 395, and arginine 429–histidine 431 contribute to the (7,8-dihydropterin-6-yl)methyl diphosphate site.

In the C-terminal section; belongs to the DHPS family. It in the N-terminal section; belongs to the HPPK family. Requires Mg(2+) as cofactor.

The enzyme catalyses 6-hydroxymethyl-7,8-dihydropterin + ATP = (7,8-dihydropterin-6-yl)methyl diphosphate + AMP + H(+). It catalyses the reaction (7,8-dihydropterin-6-yl)methyl diphosphate + 4-aminobenzoate = 7,8-dihydropteroate + diphosphate. It functions in the pathway cofactor biosynthesis; tetrahydrofolate biosynthesis; 2-amino-4-hydroxy-6-hydroxymethyl-7,8-dihydropteridine diphosphate from 7,8-dihydroneopterin triphosphate: step 4/4. It participates in cofactor biosynthesis; tetrahydrofolate biosynthesis; 7,8-dihydrofolate from 2-amino-4-hydroxy-6-hydroxymethyl-7,8-dihydropteridine diphosphate and 4-aminobenzoate: step 1/2. The polypeptide is Folate synthesis bifunctional protein (folKP) (Chlamydia muridarum (strain MoPn / Nigg)).